A 367-amino-acid polypeptide reads, in one-letter code: Beta sliding clamp (367 aa).

The protein belongs to the beta sliding clamp family. As to quaternary structure, forms a ring-shaped head-to-tail homodimer around DNA which binds and tethers DNA polymerases and other proteins to the DNA. The DNA replisome complex has a single clamp-loading complex (3 tau and 1 each of delta, delta', psi and chi subunits) which binds 3 Pol III cores (1 core on the leading strand and 2 on the lagging strand) each with a beta sliding clamp dimer. Additional proteins in the replisome are other copies of gamma, psi and chi, Ssb, DNA helicase and RNA primase.

The protein resides in the cytoplasm. Confers DNA tethering and processivity to DNA polymerases and other proteins. Acts as a clamp, forming a ring around DNA (a reaction catalyzed by the clamp-loading complex) which diffuses in an ATP-independent manner freely and bidirectionally along dsDNA. Initially characterized for its ability to contact the catalytic subunit of DNA polymerase III (Pol III), a complex, multichain enzyme responsible for most of the replicative synthesis in bacteria; Pol III exhibits 3'-5' exonuclease proofreading activity. The beta chain is required for initiation of replication as well as for processivity of DNA replication. The chain is Beta sliding clamp (dnaN) from Pseudomonas aeruginosa (strain ATCC 15692 / DSM 22644 / CIP 104116 / JCM 14847 / LMG 12228 / 1C / PRS 101 / PAO1).